Consider the following 283-residue polypeptide: Pantothenate synthetase (283 aa).

30 to 37 (MGNLHDGH) lines the ATP pocket. H37 acts as the Proton donor in catalysis. Position 61 (Q61) interacts with (R)-pantoate. Q61 is a beta-alanine binding site. 149 to 152 (GEKD) serves as a coordination point for ATP. Q155 provides a ligand contact to (R)-pantoate. 186 to 189 (LSSR) contributes to the ATP binding site.

It belongs to the pantothenate synthetase family. Homodimer.

It is found in the cytoplasm. The catalysed reaction is (R)-pantoate + beta-alanine + ATP = (R)-pantothenate + AMP + diphosphate + H(+). The protein operates within cofactor biosynthesis; (R)-pantothenate biosynthesis; (R)-pantothenate from (R)-pantoate and beta-alanine: step 1/1. Catalyzes the condensation of pantoate with beta-alanine in an ATP-dependent reaction via a pantoyl-adenylate intermediate. The polypeptide is Pantothenate synthetase (Escherichia coli (strain SMS-3-5 / SECEC)).